A 235-amino-acid chain; its full sequence is Large ribosomal subunit protein uL1 (235 aa).

Belongs to the universal ribosomal protein uL1 family. As to quaternary structure, part of the 50S ribosomal subunit.

Functionally, binds directly to 23S rRNA. The L1 stalk is quite mobile in the ribosome, and is involved in E site tRNA release. Protein L1 is also a translational repressor protein, it controls the translation of the L11 operon by binding to its mRNA. The chain is Large ribosomal subunit protein uL1 from Methylibium petroleiphilum (strain ATCC BAA-1232 / LMG 22953 / PM1).